An 890-amino-acid chain; its full sequence is Probable LRR receptor-like serine/threonine-protein kinase At1g51860 (890 aa).

The signal sequence occupies residues 1-23 (MKSLHWFLHLLIIAFTVLRSVEA). Residues 24-513 (QNQAGFISLD…KESKKVPMVA (490 aa)) lie on the Extracellular side of the membrane. 13 N-linked (GlcNAc...) asparagine glycosylation sites follow: asparagine 49, asparagine 96, asparagine 142, asparagine 181, asparagine 256, asparagine 285, asparagine 289, asparagine 295, asparagine 312, asparagine 332, asparagine 340, asparagine 402, and asparagine 419. LRR repeat units follow at residues 412-435 (RIISLNLNGSELTGSITSDISKLT), 436-458 (LLTVLDLSNNDLSGDIPTFFAEM), and 460-481 (SLKLINLSGNPNLNLTAIPDSL). N-linked (GlcNAc...) asparagine glycosylation is found at asparagine 465, asparagine 473, and asparagine 497. A helical transmembrane segment spans residues 514 to 534 (IAASVAGVFALLVILAIFFVI). Topologically, residues 535-890 (KRKNVKAHKS…STSDFAPGAR (356 aa)) are cytoplasmic. Threonine 575 is modified (phosphothreonine). The 273-residue stretch at 584–856 (NNFERVLGKG…HVVMELNDCV (273 aa)) folds into the Protein kinase domain. ATP contacts are provided by residues 590-598 (LGKGGFGTV) and lysine 611. Position 656 is a phosphotyrosine (tyrosine 656). The Proton acceptor role is filled by aspartate 708. Serine 742 bears the Phosphoserine mark. Residues threonine 743 and threonine 748 each carry the phosphothreonine modification. At tyrosine 756 the chain carries Phosphotyrosine.

Belongs to the protein kinase superfamily. Ser/Thr protein kinase family.

It localises to the membrane. It catalyses the reaction L-seryl-[protein] + ATP = O-phospho-L-seryl-[protein] + ADP + H(+). The enzyme catalyses L-threonyl-[protein] + ATP = O-phospho-L-threonyl-[protein] + ADP + H(+). The protein is Probable LRR receptor-like serine/threonine-protein kinase At1g51860 of Arabidopsis thaliana (Mouse-ear cress).